A 435-amino-acid polypeptide reads, in one-letter code: Serine--tRNA ligase (435 aa).

240 to 242 (TAE) contacts L-serine. 271-273 (RSE) serves as a coordination point for ATP. Glu294 is a binding site for L-serine. 358-361 (EISS) contacts ATP. An L-serine-binding site is contributed by Ser393.

It belongs to the class-II aminoacyl-tRNA synthetase family. Type-1 seryl-tRNA synthetase subfamily. Homodimer. The tRNA molecule binds across the dimer.

It is found in the cytoplasm. It catalyses the reaction tRNA(Ser) + L-serine + ATP = L-seryl-tRNA(Ser) + AMP + diphosphate + H(+). It carries out the reaction tRNA(Sec) + L-serine + ATP = L-seryl-tRNA(Sec) + AMP + diphosphate + H(+). Its pathway is aminoacyl-tRNA biosynthesis; selenocysteinyl-tRNA(Sec) biosynthesis; L-seryl-tRNA(Sec) from L-serine and tRNA(Sec): step 1/1. In terms of biological role, catalyzes the attachment of serine to tRNA(Ser). Is also able to aminoacylate tRNA(Sec) with serine, to form the misacylated tRNA L-seryl-tRNA(Sec), which will be further converted into selenocysteinyl-tRNA(Sec). This is Serine--tRNA ligase from Cupriavidus metallidurans (strain ATCC 43123 / DSM 2839 / NBRC 102507 / CH34) (Ralstonia metallidurans).